Consider the following 132-residue polypeptide: Pre-histone-like nucleoprotein (132 aa).

The propeptide occupies 2–23; sequence AILISPSNNTGWGLGTHKLFGG. The Nuclear localization signal signature appears at 124-132; the sequence is RRKRRVRSK.

This sequence belongs to the adenoviridae histone-like nucleoprotein family. As to quaternary structure, interacts with the core-capsid bridging protein; this interaction bridges the virus core to the capsid. Interacts with host NPM1; this interaction might play a role in placing the pre-histone-like nucleoprotein on the viral DNA or regulating viral gene expression. Interacts with host HMGB1; this interaction inhibits host immune response. Post-translationally, cleaved near the N-terminus by the viral protease during virion maturation to form the mature protein.

It is found in the virion. Its subcellular location is the host nucleus. The protein localises to the host nucleolus. Its function is as follows. Plays a role in the inhibition of host immune response within the nucleus. Interacts with cellular nucleosomes and immobilizes the host immune danger signal HMGB1 on chromatin. In turn, prevents HMGB1 release out of the cell and thus decreases inflammation. Also plays a role in the wrapping and condensation of the viral DNA. May also promote viral genome import into the nucleus. The protein is Pre-histone-like nucleoprotein of Canine adenovirus serotype 1 (strain RI261) (CAdV-1).